A 590-amino-acid polypeptide reads, in one-letter code: Glypican-3 (590 aa).

The signal sequence occupies residues 1-25 (MMPGLKLYGALILCVLVLPFSRPSS). 7 cysteine pairs are disulfide-bonded: Cys-30/Cys-67, Cys-60/Cys-255, Cys-68/Cys-258, Cys-190/Cys-342, Cys-245/Cys-278, Cys-267/Cys-418, and Cys-271/Cys-406. Asn-119 and Asn-234 each carry an N-linked (GlcNAc...) asparagine glycan. Asn-414 carries an N-linked (GlcNAc...) asparagine glycan. Disordered stretches follow at residues 429–450 (PGPGLKRVHPHGSESKQKTPEP) and 476–520 (WRAR…SGLG). Residues 495–513 (TDEDEEGLESGDCDDEDEC) are compositionally biased toward acidic residues. Residues Ser-504 and Ser-517 are each glycosylated (O-linked (Xyl...) (glycosaminoglycan) serine).

This sequence belongs to the glypican family. In terms of assembly, heterodimer; disulfide-linked. Cleavage by a furin-like convertase results in production of alpha and beta chains which form a disulfide-linked heterodimer. Post-translationally, O-glycosylated; contains heparan sulfate and/or chondroitin sulfate. Cleaved intracellularly by a furin-like convertase to generate 2 subunits, alpha and beta, which remain associated through disulfide bonds and are associated with the cell surface via the GPI-anchor. This processing is essential for its role in inhibition of hedgehog signaling. A second proteolytic event may result in cleavage of the protein on the cell surface, separating it from the GPI-anchor and leading to its shedding from the cell surface. Maternally expressed and is almost ubiquitous during blastula and gastrula stages but becomes restricted to the prospective hindbrain by 24 hours post-fertilization.

Its subcellular location is the cell membrane. Cell surface proteoglycan. Negatively regulates the hedgehog signaling pathway. Positively regulates the canonical and non-canonical Wnt signaling pathways. Binds to CD81 which decreases the availability of free CD81 for binding to the transcriptional repressor HHEX, resulting in nuclear translocation of HHEX and transcriptional repression. Inhibits the dipeptidyl peptidase activity of DPP4. Plays a role in limb patterning and skeletal development. Modulates the effects of growth factors on renal branching morphogenesis. Required for coronary vascular development. Plays a role in regulating cell movements during gastrulation. This Danio rerio (Zebrafish) protein is Glypican-3.